Here is a 514-residue protein sequence, read N- to C-terminus: Na(+)/H(+) antiporter NhaB (514 aa).

12 consecutive transmembrane segments (helical) span residues 23-43 (LALLVFLIVNPFIFLANPFVA), 63-83 (PLLPGGLLAIEAVIIGMTSAA), 97-117 (LLLMFMVAGIYFMKQLLLFIF), 120-140 (LLLSIRSKMVLSLAFCVAAAF), 144-164 (FLDALTVVAVVISVAVGFYGI), 202-222 (LMMHAGVGTALGGVMTMVGEP), 238-258 (FFLRMSPVTVPVLVCGLLTCM), 303-323 (AVIGVWLVTALALHLAEVGLI), 357-377 (LTVFFSIVAVIIDQHLFAPII), 391-411 (LFYLFNGLLSSISDNVFVGTI), 447-467 (ATPNGQAAFLFLLTSALAPLI), and 475-495 (VWMALPYTIVLTLIGLLCVEF).

The protein belongs to the NhaB Na(+)/H(+) (TC 2.A.34) antiporter family.

The protein resides in the cell inner membrane. It catalyses the reaction 2 Na(+)(in) + 3 H(+)(out) = 2 Na(+)(out) + 3 H(+)(in). Its function is as follows. Na(+)/H(+) antiporter that extrudes sodium in exchange for external protons. The protein is Na(+)/H(+) antiporter NhaB of Salmonella paratyphi A (strain ATCC 9150 / SARB42).